We begin with the raw amino-acid sequence, 312 residues long: Olfactory receptor 1D2 (312 aa).

Residues 1–25 (MDGGNQSEGSEFLLLGMSESPEQQR) lie on the Extracellular side of the membrane. A glycan (N-linked (GlcNAc...) asparagine) is linked at N5. A helical membrane pass occupies residues 26-49 (ILFWMFLSMYLVTVVGNVLIILAI). Over 50–57 (SSDSRLHT) the chain is Cytoplasmic. Residues 58-79 (PVYFFLANLSFTDLFFVTNTIP) form a helical membrane-spanning segment. The Extracellular segment spans residues 80–100 (KMLVNLQSHNKAISYAGCLTQ). C97 and C189 form a disulfide bridge. Residues 101 to 120 (LYFLVSLVALDNLILAVMAY) traverse the membrane as a helical segment. Topologically, residues 121–139 (DRYVAICCPLHYTTAMSPK) are cytoplasmic. Residues 140–158 (LCILLLSLCWVLSVLYGLI) form a helical membrane-spanning segment. Residues 159 to 196 (HTLLMTRVTFCGSRKIHYIFCEMYVLLRMACSNIQINH) are Extracellular-facing. Residue N195 is glycosylated (N-linked (GlcNAc...) asparagine). The chain crosses the membrane as a helical span at residues 197 to 219 (TVLIATGCFIFLIPFGFVIISYV). At 220-236 (LIIRAILRIPSVSKKYK) the chain is on the cytoplasmic side. Residues 237-259 (AFSTCASHLGAVSLFYGTLCMVY) traverse the membrane as a helical segment. Topologically, residues 260–271 (LKPLHTYSVKDS) are extracellular. A helical membrane pass occupies residues 272-291 (VATVMYAVVTPMMNPFIYSL). Topologically, residues 292-312 (RNKDMHGALGRLLDKHFKRLT) are cytoplasmic.

The protein belongs to the G-protein coupled receptor 1 family. Expressed in testis. Expressed in spermatozoa (at protein level). Expressed in olfactory epithelium.

Its subcellular location is the cell membrane. Functionally, odorant receptor which may be involved in sperm chemotaxis. Bourgeonal is a strong chemoattractant for sperm in vitro and is shown to be a strong agonist for OR1D2 in vitro. May also function in olfactory reception. This Homo sapiens (Human) protein is Olfactory receptor 1D2 (OR1D2).